A 302-amino-acid polypeptide reads, in one-letter code: Segregation and condensation protein A (302 aa).

Belongs to the ScpA family. In terms of assembly, component of a cohesin-like complex composed of ScpA, ScpB and the Smc homodimer, in which ScpA and ScpB bind to the head domain of Smc. The presence of the three proteins is required for the association of the complex with DNA.

The protein resides in the cytoplasm. Its function is as follows. Participates in chromosomal partition during cell division. May act via the formation of a condensin-like complex containing Smc and ScpB that pull DNA away from mid-cell into both cell halves. The chain is Segregation and condensation protein A from Xylella fastidiosa (strain 9a5c).